Reading from the N-terminus, the 239-residue chain is C-8 sterol isomerase erg2 (239 aa).

Residue Asn-11 is glycosylated (N-linked (GlcNAc...) asparagine). Residues 27–47 (KFGFLAVFVAIFAALYSYLDA) traverse the membrane as a helical segment. Asn-73 carries N-linked (GlcNAc...) asparagine glycosylation.

Belongs to the ERG2 family.

The protein localises to the endoplasmic reticulum membrane. The enzyme catalyses fecosterol = episterol. It participates in steroid metabolism; ergosterol biosynthesis. Its function is as follows. C-8 sterol isomerase; part of the third module of ergosterol biosynthesis pathway that includes the late steps of the pathway. Erg2 catalyzes the reaction which results in unsaturation at C-7 in the B ring of sterols and thus converts fecosterol to episterol. The third module or late pathway involves the ergosterol synthesis itself through consecutive reactions that mainly occur in the endoplasmic reticulum (ER) membrane. Firstly, the squalene synthase erg9 catalyzes the condensation of 2 farnesyl pyrophosphate moieties to form squalene, which is the precursor of all steroids. Squalene synthase is crucial for balancing the incorporation of farnesyl diphosphate (FPP) into sterol and nonsterol isoprene synthesis. Secondly, squalene is converted into lanosterol by the consecutive action of the squalene epoxidase erg1 and the lanosterol synthase erg7. Then, the delta(24)-sterol C-methyltransferase erg6 methylates lanosterol at C-24 to produce eburicol. Eburicol is the substrate of the sterol 14-alpha demethylase encoded by cyp51A and cyp51B, to yield 4,4,24-trimethyl ergosta-8,14,24(28)-trienol. The C-14 reductase erg24 then reduces the C14=C15 double bond which leads to 4,4-dimethylfecosterol. A sequence of further demethylations at C-4, involving the C-4 demethylation complex containing the C-4 methylsterol oxidases erg25A or erg25B, the sterol-4-alpha-carboxylate 3-dehydrogenase erg26 and the 3-keto-steroid reductase erg27, leads to the production of fecosterol via 4-methylfecosterol. The C-8 sterol isomerase erg2 then catalyzes the reaction which results in unsaturation at C-7 in the B ring of sterols and thus converts fecosterol to episterol. The sterol-C5-desaturase erg3B then catalyzes the introduction of a C-5 double bond in the B ring to produce 5-dehydroepisterol. The 2 other sterol-C5-desaturases, erg3A and erg3C, seem to be less important in ergosterol biosynthesis. The C-22 sterol desaturase erg5 further converts 5-dehydroepisterol into ergosta-5,7,22,24(28)-tetraen-3beta-ol by forming the C-22(23) double bond in the sterol side chain. Finally, ergosta-5,7,22,24(28)-tetraen-3beta-ol is substrate of the C-24(28) sterol reductases erg4A and erg4B to produce ergosterol. Possible alternative sterol biosynthetic pathways might exist from fecosterol to ergosterol, depending on the activities of the erg3 isoforms. This is C-8 sterol isomerase erg2 from Aspergillus fumigatus (strain ATCC MYA-4609 / CBS 101355 / FGSC A1100 / Af293) (Neosartorya fumigata).